A 175-amino-acid polypeptide reads, in one-letter code: Endoribonuclease YbeY (175 aa).

The Zn(2+) site is built by histidine 137, histidine 141, and histidine 147.

Belongs to the endoribonuclease YbeY family. Requires Zn(2+) as cofactor.

It localises to the cytoplasm. In terms of biological role, single strand-specific metallo-endoribonuclease involved in late-stage 70S ribosome quality control and in maturation of the 3' terminus of the 16S rRNA. The protein is Endoribonuclease YbeY of Burkholderia ambifaria (strain ATCC BAA-244 / DSM 16087 / CCUG 44356 / LMG 19182 / AMMD) (Burkholderia cepacia (strain AMMD)).